The following is a 296-amino-acid chain: 2-haloacid dehalogenase, configuration-inverting (296 aa).

This sequence belongs to the HAD-like hydrolase superfamily. S-2-haloalkanoic acid dehalogenase family.

It catalyses the reaction an (S)-2-haloacid + H2O = a (2R)-2-hydroxycarboxylate + a halide anion + H(+). The enzyme catalyses an (R)-2-haloacid + H2O = a (2S)-2-hydroxycarboxylate + a halide anion + H(+). In terms of biological role, dehalogenates both (S)- and (R)-2-haloalkanoic acids to the corresponding (R)- and (S)-hydroxyalkanoic acids, respectively, with inversion of configuration at C-2. Acts on 2-haloalkanoic acids whose carbon chain lengths are five or less. The chain is 2-haloacid dehalogenase, configuration-inverting (dhlC) from Alcaligenes xylosoxydans xylosoxydans (Achromobacter xylosoxidans).